A 600-amino-acid chain; its full sequence is MYILVLTVPLLGALVSGLFGRKIGEKGAGIFTSGCLIISLSWSLLIFYETTLNFSTTYIKLWRWLDSDLVTAYFGLQFDSLTAVMLIVVTSISTLVHIFSTAYMDGDPHVPRFMSYLSLFTFFMILLVTSDNYPQLFIGWEGVGLCSYLLINFWLTRIEANKAAIKAMLVNRVGDIGFVLAMLAIWDQFGCLDFASVFNIVALAPSDNTTLICLFLFIGAVGKSAQLGLHTWLPDAMEGPTPVSALIHAATMVTAGVFLLIRSSPLLEQAPMALMVVTIVGSLTAFMAATIGLVQNDLKKVIAYSTCSQLGYMVMACGLSQYSISLFHLMNHAFFKALLFLSAGSVIHALADEQDMRKMGGLIRSIPFTYTMIVIGSLSLMGFPYLTGFYSKDLILELAYDQYYLAFAHWLGVFSALLTAAYSLRLIYLTFISNTNAKKEVFSQAHEGSWNLTLPLILLALGSIFVGYLTKEIIWSFQITLSPIIPTSIKLMPVIFSLFGAGTAVVLYHYSSRIFNAPTSPVGLAGYTFLYSAWQFNYIINHFLVQNVWRLGHLITFRVLDKGVLELIGPKGISQFMIRLTQEISNLQSGLVYNYALMIL.

16 consecutive transmembrane segments (helical) span residues 1–21, 27–47, 81–101, 110–130, 136–156, 178–198, 200–220, 241–261, 274–294, 301–323, 327–347, 366–386, 404–424, 450–470, 488–508, and 520–540; these read MYILVLTVPLLGALVSGLFGR, GAGIFTSGCLIISLSWSLLIF, LTAVMLIVVTSISTLVHIFST, VPRFMSYLSLFTFFMILLVTS, LFIGWEGVGLCSYLLINFWLT, FVLAMLAIWDQFGCLDFASVF, IVALAPSDNTTLICLFLFIGA, TPVSALIHAATMVTAGVFLLI, LMVVTIVGSLTAFMAATIGLV, VIAYSTCSQLGYMVMACGLSQYS, FHLMNHAFFKALLFLSAGSVI, IPFTYTMIVIGSLSLMGFPYL, YLAFAHWLGVFSALLTAAYSL, WNLTLPLILLALGSIFVGYLT, SIKLMPVIFSLFGAGTAVVLY, and SPVGLAGYTFLYSAWQFNYII.

The protein belongs to the complex I subunit 5 family.

It is found in the mitochondrion inner membrane. The catalysed reaction is a ubiquinone + NADH + 5 H(+)(in) = a ubiquinol + NAD(+) + 4 H(+)(out). In terms of biological role, core subunit of the mitochondrial membrane respiratory chain NADH dehydrogenase (Complex I) that is believed to belong to the minimal assembly required for catalysis. Complex I functions in the transfer of electrons from NADH to the respiratory chain. The immediate electron acceptor for the enzyme is believed to be ubiquinone. In Metridium senile (Brown sea anemone), this protein is NADH-ubiquinone oxidoreductase chain 5 (ND5).